An 82-amino-acid chain; its full sequence is Small ribosomal subunit protein bS18 (82 aa).

The tract at residues 1 to 24 (MKRTNMKKARMEQSRRPKKNPLKA) is disordered.

Belongs to the bacterial ribosomal protein bS18 family. In terms of assembly, part of the 30S ribosomal subunit. Forms a tight heterodimer with protein bS6.

Its function is as follows. Binds as a heterodimer with protein bS6 to the central domain of the 16S rRNA, where it helps stabilize the platform of the 30S subunit. The protein is Small ribosomal subunit protein bS18 of Corynebacterium jeikeium (strain K411).